The primary structure comprises 134 residues: DNA-directed RNA polymerase subunit omega (134 aa).

It belongs to the RNA polymerase subunit omega family. The RNAP catalytic core consists of 2 alpha, 1 beta, 1 beta' and 1 omega subunit. When a sigma factor is associated with the core the holoenzyme is formed, which can initiate transcription.

It catalyses the reaction RNA(n) + a ribonucleoside 5'-triphosphate = RNA(n+1) + diphosphate. Its function is as follows. Promotes RNA polymerase assembly. Latches the N- and C-terminal regions of the beta' subunit thereby facilitating its interaction with the beta and alpha subunits. In Rhizobium johnstonii (strain DSM 114642 / LMG 32736 / 3841) (Rhizobium leguminosarum bv. viciae), this protein is DNA-directed RNA polymerase subunit omega.